A 70-amino-acid polypeptide reads, in one-letter code: Consomatin Mrc3 (70 aa).

The N-terminal stretch at 1–22 is a signal peptide; it reads MQTAYWVMVMMMVWITAPLSEG. Residues 23-55 constitute a propeptide that is removed on maturation; that stretch reads GKLNDVIRGLVPDDVTPKRILQSLISRRRFDGR. The cysteines at positions 62 and 67 are disulfide-linked. Position 64 is a D-tryptophan (W64). P68 is subject to 4-hydroxyproline. Residue Y69 is modified to Tyrosine amide.

The protein belongs to the conotoxin C superfamily. Consomatin family. As to expression, expressed by the venom duct.

The protein localises to the secreted. Its function is as follows. Moderately activates human somatostatin receptors (SSTR) with a preferential activation of SSTR1 and SSTR4. In vivo, does not cause behavioral changes in mice within a few minutes of intracranial injection, but causes a progressive loss of movement thereafter. Four to five hours after injection, mice recover, even with the highest dose tested. Shows antinociception and antihyperalgesia activities in two mouse models of acute pain, most probably by acting outside the central nervous system. The sequence is that of Consomatin Mrc3 from Conus mercator (Trader cone).